The sequence spans 453 residues: UDP-glycosyltransferase 74E2 (453 aa).

Residue histidine 17 is the Proton acceptor of the active site. Histidine 17 serves as a coordination point for an anthocyanidin. Aspartate 109 (charge relay) is an active-site residue. UDP-alpha-D-glucose is bound by residues threonine 131, glutamine 334, histidine 349, tryptophan 352, asparagine 353, serine 354, glutamate 357, aspartate 373, and glutamine 374.

This sequence belongs to the UDP-glycosyltransferase family. As to expression, expressed in roots, cotyledons and leaf hydathodes.

The catalysed reaction is (indol-3-yl)butanoate + UDP-alpha-D-glucose = 4-(indol-3-yl)butanoyl-beta-D-glucose + UDP. Glucosyltransferase that acts on the auxin indole-3-butyric acid (IBA). Mediates abiotic stress responses and stress-induced morphological adaptations by regulating auxin homeostasis. Possesses low activity in vitro on jasmonate (JA) and the synthetic auxin analog naphthaleneacetic acid (NAA). This is UDP-glycosyltransferase 74E2 (UGT74E2) from Arabidopsis thaliana (Mouse-ear cress).